Reading from the N-terminus, the 130-residue chain is Bet1-like SNARE 1-2 (130 aa).

At methionine 1–lysine 106 the chain is on the cytoplasmic side. A t-SNARE coiled-coil homology domain is found at alanine 33 to valine 95. The stretch at aspartate 40 to arginine 82 forms a coiled coil. A helical; Anchor for type IV membrane protein transmembrane segment spans residues leucine 107 to isoleucine 122. Residues arginine 123 to glycine 130 lie on the Vesicular side of the membrane.

Belongs to the BET1 family.

Its subcellular location is the golgi apparatus membrane. The protein localises to the endoplasmic reticulum membrane. Its function is as follows. Required for vesicular transport from the ER to the Golgi complex. Functions as a SNARE associated with ER-derived vesicles. This chain is Bet1-like SNARE 1-2 (BET12), found in Arabidopsis thaliana (Mouse-ear cress).